A 64-amino-acid polypeptide reads, in one-letter code: Alpha-conotoxin-like Ac1.1a (64 aa).

The N-terminal stretch at 1 to 21 (MGMRMMFTLFLLVVLTTTVVS) is a signal peptide. Residues 22-47 (YPSDSASDGRDDEAKDERSDMYELKR) constitute a propeptide that is removed on maturation. Cystine bridges form between Cys51/Cys56 and Cys52/Cys62. Position 62 is a cysteine amide (Cys62).

This sequence belongs to the conotoxin A superfamily. Expressed by the venom duct.

The protein resides in the secreted. In terms of biological role, alpha-conotoxins act on postsynaptic membranes, they bind to the nicotinic acetylcholine receptors (nAChR) and thus inhibit them. The protein is Alpha-conotoxin-like Ac1.1a of Conus achatinus (Little frog cone).